The following is an 897-amino-acid chain: N-terminal acetyltransferase A complex auxiliary subunit NAA15 (897 aa).

7 TPR repeats span residues 77-110 (HVCW…DPDN), 111-144 (LEIL…KPNH), 189-222 (TEMI…IVDK), 223-256 (LSYK…NPDN), 298-331 (SSAV…KGVP), 380-413 (LWTL…TPTV), and 488-523 (QCMW…YADI). Disordered regions lie at residues 578–640 (KSTA…DPHG) and 863–897 (SRKS…SVAT). The segment covering 602–617 (KAEARAKKEAESKSEE) has biased composition (basic and acidic residues). Residues 863–872 (SRKSNENGDT) are compositionally biased toward polar residues.

As to quaternary structure, part of the NatA complex. Associates with ribosomes. Interacts with NAA10. As to expression, expressed in leaves, roots, shoots and flowers.

In terms of biological role, auxiliary subunit of the NatA N-alpha-acetyltransferase complex. Required for male gametocyte development, embryogenesis, suspensor development and the formation of the quiescent center (QC) in the root meristem. Involved in plant immunity through the regulation of SNC1 stability. Required for embryo development. The polypeptide is N-terminal acetyltransferase A complex auxiliary subunit NAA15 (Arabidopsis thaliana (Mouse-ear cress)).